Reading from the N-terminus, the 72-residue chain is Hypotensin-1 (72 aa).

Positions 1-24 are cleaved as a signal peptide; it reads MKMMIPVIFSILLLIFSLSSTAMS. Positions 25-35 are excised as a propeptide; it reads LEDEQENMEER. The residue at position 41 (S41) is a Phosphoserine. The disordered stretch occupies residues 53–72; the sequence is ETNAKPPARFDPAAFEKSDD. Residues 61 to 72 constitute a propeptide that is removed on maturation; the sequence is RFDPAAFEKSDD.

The protein belongs to the non-disulfide-bridged peptide (NDBP) superfamily. Undergoes enzymatic cleavages by carboxypeptidases, endopeptidases, and aminopeptidases resulting in at least 46 fragments of this protein. Expressed by the venom gland.

The protein localises to the secreted. In terms of biological role, agonist of the B2 bradykinin receptor (BDKRB2). Potentiates the hypotensive effect of bradykinin (BK) and induces a direct vasorelaxing effect independent of BK, by endothelium- and nitric oxide (NO)-dependent mechanisms in rat aortic ring preparations. Also exerts proangiogenic, antiinflammatory, and antifibrogenic activities. Does not inhibit the angiotensin-converting enzyme (ACE) but increases its activity, and inhibits neprilysin (NEP) in a non-competitive manner. Exerts intermediate cytotoxicity and pro-inflammatory effects on mouse macrophages, and increases the phagocytic activity of these murine cells. Functionally, presents moderate hemolytic activity at physiological concentrations (micromolar range). Does not induce mast cell degranulation, lactate dehydrogenase (LDH) release from mast cells and antimicrobial effects. In vivo, causes intense pain (but no edema formation), when injected in mice hind paws. Also induces discomfort and anxiety in mice, as it moderately diminishes locomotion and moderately increases rearing behavior. This is Hypotensin-1 from Tityus serrulatus (Brazilian scorpion).